The following is a 537-amino-acid chain: Probable feruloyl esterase ARB_07085 (537 aa).

Residues 1 to 22 form the signal peptide; that stretch reads MVTLPLLLSILPLAAVFSSAAS. N-linked (GlcNAc...) asparagine glycosylation is found at Asn67, Asn76, and Asn189. Cystine bridges form between Cys196–Cys459, Cys263–Cys280, and Cys508–Cys529. Ser197 (acyl-ester intermediate) is an active-site residue. Asp264, Asp267, Val269, Asp271, and Val273 together coordinate Ca(2+). N-linked (GlcNAc...) asparagine glycosylation occurs at Asn339. Active-site charge relay system residues include Asp419 and His458.

It belongs to the tannase family.

Its subcellular location is the secreted. It carries out the reaction feruloyl-polysaccharide + H2O = ferulate + polysaccharide.. Functionally, hydrolyzes the feruloyl-arabinose ester bond in arabinoxylans as well as the feruloyl-galactose and feruloyl-arabinose ester bonds. The polypeptide is Probable feruloyl esterase ARB_07085 (Arthroderma benhamiae (strain ATCC MYA-4681 / CBS 112371) (Trichophyton mentagrophytes)).